The chain runs to 293 residues: Acetyl-coenzyme A carboxylase carboxyl transferase subunit beta (293 aa).

Residues 29-293 enclose the CoA carboxyltransferase N-terminal domain; it reads LWVKCSECSQ…GVKELAEANT (265 aa). 4 residues coordinate Zn(2+): cysteine 33, cysteine 36, cysteine 52, and cysteine 55. The segment at 33-55 adopts a C4-type zinc-finger fold; sequence CSECSQVAYRKDLISNFNVCSNC.

Belongs to the AccD/PCCB family. Acetyl-CoA carboxylase is a heterohexamer composed of biotin carboxyl carrier protein (AccB), biotin carboxylase (AccC) and two subunits each of ACCase subunit alpha (AccA) and ACCase subunit beta (AccD). The cofactor is Zn(2+).

The protein localises to the cytoplasm. The catalysed reaction is N(6)-carboxybiotinyl-L-lysyl-[protein] + acetyl-CoA = N(6)-biotinyl-L-lysyl-[protein] + malonyl-CoA. The protein operates within lipid metabolism; malonyl-CoA biosynthesis; malonyl-CoA from acetyl-CoA: step 1/1. In terms of biological role, component of the acetyl coenzyme A carboxylase (ACC) complex. Biotin carboxylase (BC) catalyzes the carboxylation of biotin on its carrier protein (BCCP) and then the CO(2) group is transferred by the transcarboxylase to acetyl-CoA to form malonyl-CoA. The sequence is that of Acetyl-coenzyme A carboxylase carboxyl transferase subunit beta from Prochlorococcus marinus (strain MIT 9301).